The sequence spans 311 residues: 4-hydroxy-tetrahydrodipicolinate synthase (311 aa).

Thr-51 provides a ligand contact to pyruvate. Catalysis depends on Tyr-140, which acts as the Proton donor/acceptor. Catalysis depends on Lys-168, which acts as the Schiff-base intermediate with substrate. Ile-209 contributes to the pyruvate binding site.

The protein belongs to the DapA family. Homotetramer; dimer of dimers.

It is found in the cytoplasm. It catalyses the reaction L-aspartate 4-semialdehyde + pyruvate = (2S,4S)-4-hydroxy-2,3,4,5-tetrahydrodipicolinate + H2O + H(+). The protein operates within amino-acid biosynthesis; L-lysine biosynthesis via DAP pathway; (S)-tetrahydrodipicolinate from L-aspartate: step 3/4. Functionally, catalyzes the condensation of (S)-aspartate-beta-semialdehyde [(S)-ASA] and pyruvate to 4-hydroxy-tetrahydrodipicolinate (HTPA). In Streptococcus pneumoniae (strain ATCC 700669 / Spain 23F-1), this protein is 4-hydroxy-tetrahydrodipicolinate synthase.